A 405-amino-acid polypeptide reads, in one-letter code: BRCA1-A complex subunit Abraxas 1 (405 aa).

Residues 7–153 (SALLSGFVFG…CSTYRLEHAL (147 aa)) enclose the MPN domain. Residues 208-262 (SLQEVHKINEMYATLQEELKKMCSDVEVSERSVEKLLTEVSQLKEEINRKKQHKI) are a coiled coil. Positions 365-405 (LHQDEEDCNQETKLALSSAETDEEALENPKDTNEYSYSPTF) are disordered. The residue at position 402 (Ser-402) is a Phosphoserine. The pSXXF motif signature appears at 402 to 405 (SPTF).

This sequence belongs to the FAM175 family. Abraxas subfamily. In terms of assembly, component of the BRCA1-A complex. Component of the BRISC complex. Homodimer. Interacts directly (when phosphorylated at Ser-402) with BRCA1. The phosphorylated homodimer can interact directly with two BRCA1 chains, giving rise to a heterotetramer. Phosphorylation of Ser-402 of the pSXXF motif by ATM or ATR constitutes a specific recognition motif for the BRCT domain of BRCA1.

The protein resides in the nucleus. Its function is as follows. Involved in DNA damage response and double-strand break (DSB) repair. Component of the BRCA1-A complex, acting as a central scaffold protein that assembles the various components of the complex and mediates the recruitment of BRCA1. The BRCA1-A complex specifically recognizes 'Lys-63'-linked ubiquitinated histones H2A and H2AX at DNA lesion sites, leading to target the BRCA1-BARD1 heterodimer to sites of DNA damage at DSBs. This complex also possesses deubiquitinase activity that specifically removes 'Lys-63'-linked ubiquitin on histones H2A and H2AX. This chain is BRCA1-A complex subunit Abraxas 1, found in Gallus gallus (Chicken).